Consider the following 801-residue polypeptide: Phosphatidylinositol 4-phosphate 5-kinase 1 (801 aa).

A signal peptide spans 1–21; that stretch reads MPGLHVVSFLVVLLLQLRSSG. 8 MORN repeats span residues 41–63, 64–86, 87–109, 110–132, 133–155, 156–178, 182–201, and 202–223; these read YVGS…DGAL, YDGE…SGAS, YEGD…DGSV, YKGS…NSDT, YEGF…DGNV, YIGR…NGDT, NWLN…SGAC, and YIGT…PGSK. Positions 366–797 constitute a PIPK domain; sequence GHRSYYLMLN…RFISFLEKVF (432 aa).

Expressed in young seedlings, shoot and seeds, and at lower level in roots, stem and leaf.

The enzyme catalyses a 1,2-diacyl-sn-glycero-3-phospho-(1D-myo-inositol 4-phosphate) + ATP = a 1,2-diacyl-sn-glycero-3-phospho-(1D-myo-inositol-4,5-bisphosphate) + ADP + H(+). Its function is as follows. Involved in flowering. May suppress floral initiation by modifying the expression of genes related to floral induction. The polypeptide is Phosphatidylinositol 4-phosphate 5-kinase 1 (PIPK1) (Oryza sativa subsp. japonica (Rice)).